The primary structure comprises 1121 residues: Linoleate 10R-lipoxygenase (1121 aa).

The disordered stretch occupies residues 1-66 (MLRRFSSTFK…NEKKGNSVSP (66 aa)). The span at 22–36 (TASSSSAAVANTNNN) shows a compositional bias: low complexity. Positions 50-61 (SSSDDDRNEKKG) are enriched in basic and acidic residues. Histidine 253 serves as the catalytic Proton acceptor. Residues aspartate 254, serine 269, tyrosine 271, aspartate 273, and serine 275 each coordinate Ca(2+).

This sequence belongs to the peroxidase family.

The enzyme catalyses (9Z,12Z)-octadecadienoate + O2 = (8E,10R,12Z)-10-hydroperoxyoctadeca-8,12-dienoate. Functionally, responsible for the synthesis of various fatty acid-derived oxylipins. Oxidizes linoleic acid primarily to 10R-hydroperoxy-8,12-octadecadienoic acid (10R-HPODE) and, to a lesser extent, 8R-hydroperoxylinoleic acid (8R-HPODE). Also synthesizes 10-hydroxy-octadeca-8,12-dienoic acid (10-HODE) from linoleic acid and primarily 8R-hydroxy-octadeca-9-monoenoic acid (8-HOME, also known as psiB beta) from oleic acid. 8-HOME forms part of psi factor, a mixture of oxylipins that regulates the balance between sexual and asexual spore production. Displays epoxyalcohol synthase activity. Plays a role in the synthesis of prostaglandins which may be required for pathogenicity. This Aspergillus fumigatus (strain ATCC MYA-4609 / CBS 101355 / FGSC A1100 / Af293) (Neosartorya fumigata) protein is Linoleate 10R-lipoxygenase.